A 505-amino-acid polypeptide reads, in one-letter code: Mannosyl-oligosaccharide alpha-1,2-mannosidase 1B (505 aa).

The N-terminal stretch at 1–16 is a signal peptide; it reads MRTLLALAALAGFAAA. N-linked (GlcNAc...) asparagine glycans are attached at residues Asn-88 and Asn-174. Cys-325 and Cys-354 form a disulfide bridge. Residue Asn-359 is glycosylated (N-linked (GlcNAc...) asparagine). Glu-368 (proton donor) is an active-site residue. Thr-494 contributes to the Ca(2+) binding site.

It belongs to the glycosyl hydrolase 47 family. Monomer. Ca(2+) is required as a cofactor. The cofactor is Mg(2+).

The protein localises to the cytoplasmic vesicle lumen. It carries out the reaction N(4)-(alpha-D-Man-(1-&gt;2)-alpha-D-Man-(1-&gt;2)-alpha-D-Man-(1-&gt;3)-[alpha-D-Man-(1-&gt;2)-alpha-D-Man-(1-&gt;3)-[alpha-D-Man-(1-&gt;2)-alpha-D-Man-(1-&gt;6)]-alpha-D-Man-(1-&gt;6)]-beta-D-Man-(1-&gt;4)-beta-D-GlcNAc-(1-&gt;4)-beta-D-GlcNAc)-L-asparaginyl-[protein] (N-glucan mannose isomer 9A1,2,3B1,2,3) + 4 H2O = N(4)-(alpha-D-Man-(1-&gt;3)-[alpha-D-Man-(1-&gt;3)-[alpha-D-Man-(1-&gt;6)]-alpha-D-Man-(1-&gt;6)]-beta-D-Man-(1-&gt;4)-beta-D-GlcNAc-(1-&gt;4)-beta-D-GlcNAc)-L-asparaginyl-[protein] (N-glucan mannose isomer 5A1,2) + 4 beta-D-mannose. The enzyme catalyses N(4)-(alpha-D-Man-(1-&gt;2)-alpha-D-Man-(1-&gt;2)-alpha-D-Man-(1-&gt;3)-[alpha-D-Man-(1-&gt;3)-[alpha-D-Man-(1-&gt;2)-alpha-D-Man-(1-&gt;6)]-alpha-D-Man-(1-&gt;6)]-beta-D-Man-(1-&gt;4)-beta-D-GlcNAc-(1-&gt;4)-beta-D-GlcNAc)-L-asparaginyl-[protein] (N-glucan mannose isomer 8A1,2,3B1,3) + 3 H2O = N(4)-(alpha-D-Man-(1-&gt;3)-[alpha-D-Man-(1-&gt;3)-[alpha-D-Man-(1-&gt;6)]-alpha-D-Man-(1-&gt;6)]-beta-D-Man-(1-&gt;4)-beta-D-GlcNAc-(1-&gt;4)-beta-D-GlcNAc)-L-asparaginyl-[protein] (N-glucan mannose isomer 5A1,2) + 3 beta-D-mannose. It participates in protein modification; protein glycosylation. Functionally, involved in the maturation of Asn-linked oligosaccharides. Progressively trims alpha-1,2-linked mannose residues from Man(9)GlcNAc(2) to produce Man(5)GlcNAc(2). This chain is Mannosyl-oligosaccharide alpha-1,2-mannosidase 1B (mns1B), found in Emericella nidulans (strain FGSC A4 / ATCC 38163 / CBS 112.46 / NRRL 194 / M139) (Aspergillus nidulans).